A 562-amino-acid polypeptide reads, in one-letter code: Protein wntless (562 aa).

At Met-1–Lys-13 the chain is on the cytoplasmic side. The chain crosses the membrane as a helical span at residues Leu-14–Leu-34. At Tyr-35 to His-239 the chain is on the lumenal side. N-linked (GlcNAc...) asparagine glycosylation is present at Asn-58. A helical membrane pass occupies residues Val-240–Trp-260. Topologically, residues Arg-261 to Pro-270 are cytoplasmic. A helical membrane pass occupies residues Ala-271–Leu-291. Residues Glu-292–Gln-311 are Lumenal-facing. Residues Gly-312–Ile-332 traverse the membrane as a helical segment. The Cytoplasmic segment spans residues Gln-333–Arg-344. The helical transmembrane segment at Tyr-345–Ser-365 threads the bilayer. At Glu-366–Lys-386 the chain is on the lumenal side. The chain crosses the membrane as a helical span at residues Val-387–Cys-407. Residues Tyr-408–Arg-441 lie on the Cytoplasmic side of the membrane. Residues Phe-442–Met-462 form a helical membrane-spanning segment. Residues Gly-463–Ser-482 lie on the Lumenal side of the membrane. Residues Ala-483–Tyr-503 form a helical membrane-spanning segment. Residues Ala-504–Glu-562 lie on the Cytoplasmic side of the membrane. The segment at Ser-538–Glu-562 is disordered. The span at Asn-539–Thr-556 shows a compositional bias: polar residues.

It belongs to the wntless family. Interacts with wg; in the Golgi. Interacts with Vps35, a component of the retromer complex; wls stability is regulated by Vps35.

It localises to the presynaptic cell membrane. The protein resides in the postsynaptic cell membrane. Its subcellular location is the cell membrane. The protein localises to the endoplasmic reticulum membrane. It is found in the endosome membrane. It localises to the golgi apparatus membrane. Its function is as follows. A segment polarity gene required for wingless (wg)-dependent patterning processes, acting in both wg-sending cells and wg-target cells. In non-neuronal cells wls directs wg secretion. The wls traffic loop encompasses the Golgi, the cell surface, an endocytic compartment and a retrograde route leading back to the Golgi, and involves clathrin-mediated endocytosis and the retromer complex (a conserved protein complex consisting of Vps35 and Vps26). In neuronal cells (the larval motorneuron NMJ), the wg signal moves across the synapse via the release of wls-containing exosome-like vesicles. Postsynaptic wls is required for the trafficking of fz2 through the fz2-interacting protein Grip. The sequence is that of Protein wntless from Drosophila pseudoobscura pseudoobscura (Fruit fly).